Consider the following 305-residue polypeptide: ATP synthase subunit gamma, mitochondrial (305 aa).

Belongs to the ATPase gamma chain family. F-type ATPases have 2 components, F(1) - the catalytic core - and F(o) - the membrane proton channel. F(1) has five subunits: alpha(3), beta(3), gamma(1), delta(1), epsilon(1), plus the additional subunit P18 (Tb427.05.1710) that is not present in F(1)F(o) ATP synthase from metazoa. Subunit P18 (Tb927.5.1710) interacts with the alpha subunit with a 1:1 stoichiometry; the interaction is direct. Subunit gamma is part of the central stalk. F(o) has three main subunits: a, b and c. The trypanosomal ATPase complex contains additional subunits that are not present in the F(1)F(o) ATP synthase from metazoa.

Its subcellular location is the mitochondrion. The protein localises to the mitochondrion inner membrane. Mitochondrial membrane ATP synthase (F(1)F(o) ATP synthase) produces ATP from ADP in the presence of a proton gradient across the membrane which is generated by electron transport complexes of the respiratory chain. F-type ATPases consist of two structural domains, F(1) - containing the extramembraneous catalytic core, and F(o) - containing the membrane proton channel, linked together by a central stalk and a peripheral stalk. During catalysis, ATP synthesis in the catalytic domain of F(1) is coupled via a rotary mechanism of the central stalk subunits to proton translocation. Subunits alpha and beta form the catalytic core in F(1). Rotation of the central stalk against the surrounding alpha(3)beta(3) subunits leads to hydrolysis of ATP in three separate catalytic sites on the beta subunits. Contrary to the procyclic, insect form that requires F(1)F(o) ATP synthase for ATP synthesis, the bloodstream form relies on ATP hydrolysis by F(1)F(o) ATP synthase to maintain its mitochondrial membrane potential. The polypeptide is ATP synthase subunit gamma, mitochondrial (Trypanosoma brucei brucei).